We begin with the raw amino-acid sequence, 356 residues long: GDSL esterase/lipase At2g36325 (356 aa).

The signal sequence occupies residues 1–26 (MNITKLTPWFLFSCLILLSDYIKVNS). Asn-25 carries N-linked (GlcNAc...) asparagine glycosylation. The active-site Nucleophile is Ser-54. 3 N-linked (GlcNAc...) asparagine glycosylation sites follow: Asn-165, Asn-185, and Asn-240. Residues Asp-334 and His-337 contribute to the active site.

Belongs to the 'GDSL' lipolytic enzyme family.

The protein localises to the secreted. The sequence is that of GDSL esterase/lipase At2g36325 from Arabidopsis thaliana (Mouse-ear cress).